Reading from the N-terminus, the 688-residue chain is Sialic acid-binding Ig-like lectin 10 (688 aa).

A signal peptide spans 1–17; it reads MSLLLFLLSFLLDGPQG. Topologically, residues 18–543 are extracellular; that stretch reads QMESYFLQVQ…DKDSATAFSK (526 aa). In terms of domain architecture, Ig-like V-type spans 26–138; that stretch reads VQRIVKAQEG…SFKEEFRLQV (113 aa). 3 cysteine pairs are disulfide-bonded: cysteine 37/cysteine 172, cysteine 42/cysteine 102, and cysteine 163/cysteine 214. Arginine 120 contacts N-acetylneuraminate. The 84-residue stretch at 145–228 folds into the Ig-like C2-type 1 domain; that stretch reads PDIFIPEVLE…SRMSTQRTVR (84 aa). 2 N-linked (GlcNAc...) asparagine glycosylation sites follow: asparagine 195 and asparagine 246. Ig-like C2-type domains lie at 250–334 and 339–436; these read PDLH…LDLS and PQDL…LSLS. 2 disulfides stabilise this stretch: cysteine 271–cysteine 318 and cysteine 375–cysteine 420. A helical transmembrane segment spans residues 544 to 564; the sequence is GAVLGFGITALLALCLIVVIV. The Cytoplasmic segment spans residues 565–688; the sequence is KTLQKKGTQE…YSDYTEVRVH (124 aa). The short motif at 588 to 593 is the ITIM motif 1 element; the sequence is LDYINV. The disordered stretch occupies residues 602–656; the sequence is RNWKAEPDAPSRSSPLDTHFPKPKKKQKDPHFTYPGCPDPTSSSQVPVSENNPEE. Polar residues predominate over residues 641 to 652; that stretch reads PTSSSQVPVSEN. The ITIM motif 2 motif lies at 657-662; the sequence is LHYAAL. Tyrosine 659 carries the phosphotyrosine modification.

It belongs to the immunoglobulin superfamily. SIGLEC (sialic acid binding Ig-like lectin) family. In terms of assembly, interacts with PTPN6/SHP-1 upon phosphorylation. Interacts with NCF1. Interacts with CD24; the probable CD24:SIGLEC10 complex is proposed to inhibit HGMB1-mediated tissue damage immune response. Interacts with HMGB1; the interaction is dependent on CD24. Associates with membrane IgM on the B cell surface. Interacts with RIGI, CBL and PTPN11. Phosphorylation of Tyr-659 is involved in binding to PTPN6. Expressed in B cells with high levels in pre-B cells and B1a cells of the peritoneal cavity.

The protein localises to the cell membrane. Putative adhesion molecule that mediates sialic-acid dependent binding to cells. Preferentially binds to alpha-2,3- or alpha-2,6-linked sialic acid. The sialic acid recognition site may be masked by cis interactions with sialic acids on the same cell surface. In the immune response, seems to act as an inhibitory receptor upon ligand induced tyrosine phosphorylation by recruiting cytoplasmic phosphatase(s) via their SH2 domain(s) that block signal transduction through dephosphorylation of signaling molecules. Involved in negative regulation of B-cell antigen receptor signaling and specifically acts on B1 cells to inhibit Ca(2+) signaling, cellular expansion and antibody secretion. The inhibition of B cell activation is dependent on PTPN6/SHP-1. In association with CD24 may be involved in the selective suppression of the immune response to danger-associated molecular patterns (DAMPs) such as HMGB1, HSP70 and HSP90. In association with CD24 may regulate the immune repsonse of natural killer (NK) cells. Plays a role in the control of autoimmunity. During initiation of adaptive immune responses by CD8-alpha(+) dendritic cells inhibits cross-presentation by impairing the formation of MHC class I-peptide complexes. The function seems to implicate recruitment of PTPN6/SHP-1, which dephosphorylates NCF1 of the NADPH oxidase complex consequently promoting phagosomal acidification. Functionally, (Microbial infection) During infection by RNA viruses inhibits RIG-I signaling in macrophages by promoting its CBL-dependent ubiquitination and degradation via PTPN11/SHP-2. This chain is Sialic acid-binding Ig-like lectin 10 (Siglec10), found in Mus musculus (Mouse).